Here is a 197-residue protein sequence, read N- to C-terminus: MSTYTIPNVIAQHPRGGERITDIYSHLLAERIVYLGTPIDSGVANALIAQLLHLESESPDQEINFYINCEGGDLPSMLAVYDTMQHIGAPVHTTCVGQAIAVGAVLLAGGAPGQRAMLPHARVVLHQPAARGQGPIPDLILQADELVRMRSEIEAILSRHTGRSPEQLREDTDRDRVFTATAALEYGLIDTVLSPRG.

The active site involves H126.

The protein belongs to the peptidase S14 family. As to quaternary structure, fourteen ClpP subunits assemble into 2 heptameric rings which stack back to back to give a disk-like structure with a central cavity, resembling the structure of eukaryotic proteasomes.

Its subcellular location is the cytoplasm. The enzyme catalyses Hydrolysis of proteins to small peptides in the presence of ATP and magnesium. alpha-casein is the usual test substrate. In the absence of ATP, only oligopeptides shorter than five residues are hydrolyzed (such as succinyl-Leu-Tyr-|-NHMec, and Leu-Tyr-Leu-|-Tyr-Trp, in which cleavage of the -Tyr-|-Leu- and -Tyr-|-Trp bonds also occurs).. Cleaves peptides in various proteins in a process that requires ATP hydrolysis. Has a chymotrypsin-like activity. Plays a major role in the degradation of misfolded proteins. The sequence is that of ATP-dependent Clp protease proteolytic subunit 1 from Nocardia farcinica (strain IFM 10152).